The following is a 385-amino-acid chain: Probable alpha-galactosidase (385 aa).

The first 19 residues, Met-1–Ala-19, serve as a signal peptide directing secretion. 2 disulfide bridges follow: Cys-40–Cys-72 and Cys-119–Cys-149. Residue Asp-147 is the Nucleophile of the active site. Asp-180 to Glu-184 serves as a coordination point for substrate. Asp-202 serves as the catalytic Proton donor.

It belongs to the glycosyl hydrolase 27 family.

It catalyses the reaction Hydrolysis of terminal, non-reducing alpha-D-galactose residues in alpha-D-galactosides, including galactose oligosaccharides, galactomannans and galactolipids.. The sequence is that of Probable alpha-galactosidase (melA) from Dictyostelium discoideum (Social amoeba).